We begin with the raw amino-acid sequence, 317 residues long: Proline-rich protein 2 (317 aa).

Residues 1–16 (MLVVLFTVALLALSSA) form the signal peptide. The disordered stretch occupies residues 15–317 (SAQGPREELQ…PPQGRPQGPQ (303 aa)). Pro residues predominate over residues 32-44 (QRPPPSGSQPRPP). A glycan (N-linked (GlcNAc...) asparagine) is linked at Asn46. Composition is skewed to pro residues over residues 51–183 (GPPP…PPAG) and 204–288 (QSPP…PTQG). Over residues 289–305 (PHPTGGPQQTPPLAGNP) the composition is skewed to low complexity. Pro residues predominate over residues 306 to 317 (QGPPQGRPQGPQ).

It is found in the secreted. This Mus musculus (Mouse) protein is Proline-rich protein 2 (Prp2).